A 770-amino-acid polypeptide reads, in one-letter code: Nucleus-vacuole junction protein 2 (770 aa).

Residues 1-5 (MASLK) are Cytoplasmic-facing. The chain crosses the membrane as a helical; Signal-anchor for type II membrane protein span at residues 6–26 (VFLAVYLLGGITFLPLVLFTL). At 27 to 770 (YKIHLLYSNL…EFEEQREPKL (744 aa)) the chain is on the lumenal side. The region spanning 114–266 (TALQEQILQR…WYYQLINASK (153 aa)) is the PH domain. Residues Asn-228, Asn-263, Asn-279, Asn-300, Asn-391, Asn-528, and Asn-529 are each glycosylated (N-linked (GlcNAc...) asparagine). Residues 304–504 (NQLTTKWLNA…YPTPNEVYRG (201 aa)) enclose the SMP-LTD domain. Disordered regions lie at residues 541–566 (EGGM…LKDL), 578–600 (TQTT…TKSR), and 615–770 (KDNV…EPKL). The segment covering 554 to 566 (LRPERKKENLKDL) has biased composition (basic and acidic residues). Polar residues predominate over residues 587–596 (NDDVSSSENS). N-linked (GlcNAc...) asparagine glycans are attached at residues Asn-595 and Asn-620. Residues Ser-640 and Ser-669 each carry the phosphoserine modification. Positions 679–688 (LEGRKEKDTE) are enriched in basic and acidic residues. Asn-700 carries an N-linked (GlcNAc...) asparagine glycan. 2 stretches are compositionally biased toward polar residues: residues 713 to 725 (FSVS…NSLK) and 736 to 751 (LESS…QNRF). Ser-717 is modified (phosphoserine). Asn-718 carries an N-linked (GlcNAc...) asparagine glycan. Phosphoserine is present on residues Ser-720 and Ser-723. Basic and acidic residues predominate over residues 756-770 (FKQDLEFEEQREPKL).

The protein resides in the endoplasmic reticulum membrane. It localises to the nucleus membrane. Functionally, during endoplasmic reticulum (ER) stress or when cellular ceramide levels increase, induces contacts between the ER and medial-Golgi complex to facilitate non-vesicular transport of ceramides from the ER to the Golgi complex where they are converted to complex sphingolipids, preventing toxic ceramide accumulation. The sequence is that of Nucleus-vacuole junction protein 2 from Saccharomyces cerevisiae (strain ATCC 204508 / S288c) (Baker's yeast).